A 160-amino-acid chain; its full sequence is Large ribosomal subunit protein eL14 (160 aa).

The interval 136–160 is disordered; it reads SDGTPRILKKDRRERLRAEKAKAKK. A compositionally biased stretch (basic and acidic residues) spans 146–160; that stretch reads DRRERLRAEKAKAKK.

The protein belongs to the eukaryotic ribosomal protein eL14 family.

This Drosophila virilis (Fruit fly) protein is Large ribosomal subunit protein eL14 (RpL14).